The primary structure comprises 412 residues: Multifunctional CCA protein (412 aa).

Residues Gly-8 and Arg-11 each contribute to the ATP site. CTP is bound by residues Gly-8 and Arg-11. Mg(2+)-binding residues include Asp-21 and Asp-23. Positions 91, 137, and 140 each coordinate ATP. Positions 91, 137, and 140 each coordinate CTP. Positions 228-329 constitute an HD domain; the sequence is TGIHTLMTLS…VKLFDSIDAW (102 aa).

This sequence belongs to the tRNA nucleotidyltransferase/poly(A) polymerase family. Bacterial CCA-adding enzyme type 1 subfamily. In terms of assembly, monomer. Can also form homodimers and oligomers. It depends on Mg(2+) as a cofactor. Ni(2+) serves as cofactor.

It carries out the reaction a tRNA precursor + 2 CTP + ATP = a tRNA with a 3' CCA end + 3 diphosphate. The enzyme catalyses a tRNA with a 3' CCA end + 2 CTP + ATP = a tRNA with a 3' CCACCA end + 3 diphosphate. In terms of biological role, catalyzes the addition and repair of the essential 3'-terminal CCA sequence in tRNAs without using a nucleic acid template. Adds these three nucleotides in the order of C, C, and A to the tRNA nucleotide-73, using CTP and ATP as substrates and producing inorganic pyrophosphate. tRNA 3'-terminal CCA addition is required both for tRNA processing and repair. Also involved in tRNA surveillance by mediating tandem CCA addition to generate a CCACCA at the 3' terminus of unstable tRNAs. While stable tRNAs receive only 3'-terminal CCA, unstable tRNAs are marked with CCACCA and rapidly degraded. This Escherichia coli O7:K1 (strain IAI39 / ExPEC) protein is Multifunctional CCA protein.